The primary structure comprises 232 residues: Octanoyltransferase (232 aa).

Residues 44-219 form the BPL/LPL catalytic domain; the sequence is EHTGDELWVV…QLARQFGLVL (176 aa). Substrate contacts are provided by residues 83-90, 150-152, and 163-165; these read RGGQVTYH, ALG, and GLS. The active-site Acyl-thioester intermediate is the C181.

It belongs to the LipB family.

Its subcellular location is the cytoplasm. It carries out the reaction octanoyl-[ACP] + L-lysyl-[protein] = N(6)-octanoyl-L-lysyl-[protein] + holo-[ACP] + H(+). It functions in the pathway protein modification; protein lipoylation via endogenous pathway; protein N(6)-(lipoyl)lysine from octanoyl-[acyl-carrier-protein]: step 1/2. In terms of biological role, catalyzes the transfer of endogenously produced octanoic acid from octanoyl-acyl-carrier-protein onto the lipoyl domains of lipoate-dependent enzymes. Lipoyl-ACP can also act as a substrate although octanoyl-ACP is likely to be the physiological substrate. The polypeptide is Octanoyltransferase (Xanthomonas campestris pv. campestris (strain 8004)).